A 245-amino-acid chain; its full sequence is UPF0246 protein LBUL_1917 (245 aa).

This sequence belongs to the UPF0246 family.

This Lactobacillus delbrueckii subsp. bulgaricus (strain ATCC BAA-365 / Lb-18) protein is UPF0246 protein LBUL_1917.